A 240-amino-acid chain; its full sequence is Lactate utilization protein C (240 aa).

This sequence belongs to the LutC/YkgG family.

Is involved in L-lactate degradation and allows cells to grow with lactate as the sole carbon source. The polypeptide is Lactate utilization protein C (Geobacillus kaustophilus (strain HTA426)).